The sequence spans 179 residues: Large ribosomal subunit protein bL25 (179 aa).

This sequence belongs to the bacterial ribosomal protein bL25 family. CTC subfamily. Part of the 50S ribosomal subunit; part of the 5S rRNA/L5/L18/L25 subcomplex. Contacts the 5S rRNA. Binds to the 5S rRNA independently of L5 and L18.

This is one of the proteins that binds to the 5S RNA in the ribosome where it forms part of the central protuberance. The protein is Large ribosomal subunit protein bL25 of Desulfitobacterium hafniense (strain DSM 10664 / DCB-2).